A 451-amino-acid polypeptide reads, in one-letter code: POU domain, class 3, transcription factor 1 (451 aa).

Disordered regions lie at residues 1-21 (MATT…GTGP), 69-114 (AHPQ…GFHA), 127-154 (AWAQ…HQPQ), 186-253 (GLHH…PSSD), and 395-451 (KRMT…GSVQ). 3 stretches are compositionally biased toward gly residues: residues 11–20 (GPGGGAGGTG), 76–85 (TGGGGGGDWA), and 95–112 (AGGG…GGGF). Positions 190–199 (ALHEDGHEAQ) are enriched in basic and acidic residues. Residues 220–232 (AGGLHAAAAHLHP) are compositionally biased toward low complexity. Residues 247-321 (EDAPSSDDLE…LLNKWLEETD (75 aa)) form the POU-specific domain. The segment at residues 339 to 398 (KRKKRTSIEVGVKGALESHFLKCPKPSAHEITGLADSLQLEKEVVRVWFCNRRQKEKRMT) is a DNA-binding region (homeobox). Over residues 427 to 436 (PSAPPPPPPA) the composition is skewed to pro residues.

Belongs to the POU transcription factor family. Class-3 subfamily. In terms of tissue distribution, expressed in embryonal stem cells and in the developing brain.

Its subcellular location is the nucleus. Transcription factor that binds to the octamer motif (5'-ATTTGCAT-3'). Acts as a transcriptional activator when binding cooperatively with SOX4, SOX11, or SOX12 to gene promoters. Acts as a transcriptional repressor of myelin-specific genes. The protein is POU domain, class 3, transcription factor 1 (POU3F1) of Homo sapiens (Human).